The chain runs to 532 residues: Cytokinin dehydrogenase 8 (532 aa).

The signal sequence occupies residues Met1–Ser26. An FAD-binding PCMH-type domain is found at Val51–Ala238. 3 residues coordinate FAD: Ala87, Gly89, and Gly91. Position 92 is a pros-8alpha-FAD histidine (His92). Residues Ser93, Gln97, Asp162, Thr167, Ser173, Ile177, and Ile228 each coordinate FAD. N-linked (GlcNAc...) asparagine glycosylation is present at Asn420. 2 residues coordinate FAD: Tyr482 and Gln520.

It belongs to the oxygen-dependent FAD-linked oxidoreductase family. In terms of assembly, monomer. FAD serves as cofactor.

The protein resides in the secreted. The protein localises to the extracellular space. It carries out the reaction N(6)-dimethylallyladenine + A + H2O = 3-methyl-2-butenal + adenine + AH2. Catalyzes the oxidation of cytokinins, a family of N(6)-substituted adenine derivatives that are plant hormones, where the substituent is an isopentenyl group. This chain is Cytokinin dehydrogenase 8 (CKX8), found in Oryza sativa subsp. indica (Rice).